Reading from the N-terminus, the 170-residue chain is CFA/I fimbrial subunit B (170 aa).

Positions 1–23 (MKFKKTIGAMALTTMFVAVSASA) are cleaved as a signal peptide.

The protein belongs to the fimbrial CS1 protein family. As to quaternary structure, CFA/I fimbriae are rather rigid, thread-like filaments of 0.5-1 micrometer, with an apparent axial hole, and a diameter of 7 nanometers. A single CFA/I fimbria consists of about 100 identical protein subunits.

The protein resides in the fimbrium. Its function is as follows. Fimbriae (also called pili), polar filaments radiating from the surface of the bacterium to a length of 0.5-1.5 micrometers and numbering 100-300 per cell, enable bacteria to colonize the epithelium of specific host organs. This is CFA/I fimbrial subunit B (cfaB) from Escherichia coli O78:H11 (strain H10407 / ETEC).